Consider the following 643-residue polypeptide: Coiled-coil domain-containing protein 8 (643 aa).

The disordered stretch occupies residues 93-124 (VGTYDSSNGSDSELSDFDTSKVKGNRGSGKTR). S141 and S144 each carry phosphoserine. 5 disordered regions span residues 156–191 (RRGE…KGDR), 206–492 (QRVR…TPRA), 519–540 (IDSQ…NQRV), 553–577 (DQRE…ARKQ), and 603–643 (PRLP…EEQL). The segment covering 218-227 (EVGQAQQSSI) has biased composition (polar residues). Basic and acidic residues predominate over residues 230–247 (RAGEMRHSHTSPDLDDSS). The segment covering 248–259 (RNTGDLSDQTLI) has biased composition (polar residues). The segment covering 261–276 (RRWKPKIKWVSLRRCR) has biased composition (basic residues). Composition is skewed to low complexity over residues 294 to 399 (AAEN…AEAA), 409 to 432 (NPRT…EATA), and 459 to 473 (RVEA…AAAS). The segment covering 528-537 (VNQSTGATEN) has biased composition (polar residues). The short motif at 603–609 (PRLPTLP) is the PxLPxI/L motif; mediates interaction with ANKRA2 element. Basic and acidic residues predominate over residues 626–643 (LRADTRADMEHREQEEQL).

As to quaternary structure, component of the 3M complex, composed of core components CUL7, CCDC8 and OBSL1. Interacts (via PxLPxI/L motif) with ANKRA2 (via ankyrin repeats); may link the 3M complex to histone deacetylases including HDAC4 and HDAC5.

It is found in the cytoplasm. The protein localises to the cytoskeleton. It localises to the microtubule organizing center. The protein resides in the centrosome. Its function is as follows. Core component of the 3M complex, a complex required to regulate microtubule dynamics and genome integrity. It is unclear how the 3M complex regulates microtubules, it could act by controlling the level of a microtubule stabilizer. Required for localization of CUL7 to the centrosome. The protein is Coiled-coil domain-containing protein 8 (Ccdc8) of Rattus norvegicus (Rat).